Here is a 349-residue protein sequence, read N- to C-terminus: Anthranilate phosphoribosyltransferase (349 aa).

5-phospho-alpha-D-ribose 1-diphosphate contacts are provided by residues Gly82, Gly85–Asp86, Asn92–Thr95, Lys110–Gly118, and Ser122. Position 82 (Gly82) interacts with anthranilate. Ser94 is a binding site for Mg(2+). Asn113 is an anthranilate binding site. Arg168 contributes to the anthranilate binding site. The Mg(2+) site is built by Asp227 and Glu228.

It belongs to the anthranilate phosphoribosyltransferase family. Homodimer. Mg(2+) is required as a cofactor.

The enzyme catalyses N-(5-phospho-beta-D-ribosyl)anthranilate + diphosphate = 5-phospho-alpha-D-ribose 1-diphosphate + anthranilate. Its pathway is amino-acid biosynthesis; L-tryptophan biosynthesis; L-tryptophan from chorismate: step 2/5. In terms of biological role, catalyzes the transfer of the phosphoribosyl group of 5-phosphorylribose-1-pyrophosphate (PRPP) to anthranilate to yield N-(5'-phosphoribosyl)-anthranilate (PRA). This Pseudomonas fluorescens (strain SBW25) protein is Anthranilate phosphoribosyltransferase.